Consider the following 185-residue polypeptide: Ribosome-recycling factor (185 aa).

Belongs to the RRF family.

The protein resides in the cytoplasm. Functionally, responsible for the release of ribosomes from messenger RNA at the termination of protein biosynthesis. May increase the efficiency of translation by recycling ribosomes from one round of translation to another. The sequence is that of Ribosome-recycling factor from Corynebacterium diphtheriae (strain ATCC 700971 / NCTC 13129 / Biotype gravis).